Reading from the N-terminus, the 158-residue chain is Transcription elongation factor GreA (158 aa).

Belongs to the GreA/GreB family.

In terms of biological role, necessary for efficient RNA polymerase transcription elongation past template-encoded arresting sites. The arresting sites in DNA have the property of trapping a certain fraction of elongating RNA polymerases that pass through, resulting in locked ternary complexes. Cleavage of the nascent transcript by cleavage factors such as GreA or GreB allows the resumption of elongation from the new 3'terminus. GreA releases sequences of 2 to 3 nucleotides. The protein is Transcription elongation factor GreA of Psychrobacter cryohalolentis (strain ATCC BAA-1226 / DSM 17306 / VKM B-2378 / K5).